A 186-amino-acid polypeptide reads, in one-letter code: Peptidyl-tRNA hydrolase (186 aa).

Position 14 (Y14) interacts with tRNA. The active-site Proton acceptor is H19. 3 residues coordinate tRNA: Y61, N63, and N107.

This sequence belongs to the PTH family. Monomer.

Its subcellular location is the cytoplasm. The enzyme catalyses an N-acyl-L-alpha-aminoacyl-tRNA + H2O = an N-acyl-L-amino acid + a tRNA + H(+). Functionally, hydrolyzes ribosome-free peptidyl-tRNAs (with 1 or more amino acids incorporated), which drop off the ribosome during protein synthesis, or as a result of ribosome stalling. In terms of biological role, catalyzes the release of premature peptidyl moieties from peptidyl-tRNA molecules trapped in stalled 50S ribosomal subunits, and thus maintains levels of free tRNAs and 50S ribosomes. This Helicobacter pylori (strain HPAG1) protein is Peptidyl-tRNA hydrolase.